The sequence spans 360 residues: Protein phosphatase 1 regulatory subunit 7 (360 aa).

Residues methionine 1–leucine 65 are disordered. N-acetylalanine is present on alanine 2. Serine 12, serine 24, serine 27, serine 44, and serine 47 each carry phosphoserine. The span at glutamate 17–lysine 34 shows a compositional bias: basic and acidic residues. Positions glutamate 53–glutamine 63 are enriched in acidic residues. LRR repeat units lie at residues aspartate 77–lysine 98, lysine 99–glutamine 120, serine 121–threonine 142, glutamate 143–threonine 164, arginine 165–histidine 186, glutamine 187–threonine 208, asparagine 209–threonine 230, asparagine 231–valine 252, asparagine 253–asparagine 274, lysine 275–threonine 296, and glutamate 297–lysine 318. At serine 322 the chain carries Phosphoserine. In terms of domain architecture, LRRCT spans asparagine 331–phenylalanine 360.

This sequence belongs to the SDS22 family. As to quaternary structure, interacts with PPP1CA, PPP1CB and PPP1CC/PPP1G. Interacts with PPP1CC isoform 2 in motile caudal epididymal spermatozoa. Expressed in epididymal spermatozoa including the principal piece of the flagellum and the head-neck junction.

The protein localises to the nucleus. Regulatory subunit of protein phosphatase 1. Inactivates the PPP1CC isoform 2 during epididymal sperm maturation. The polypeptide is Protein phosphatase 1 regulatory subunit 7 (PPP1R7) (Bos taurus (Bovine)).